The primary structure comprises 101 residues: Urease subunit beta (101 aa).

It belongs to the urease beta subunit family. In terms of assembly, heterotrimer of UreA (gamma), UreB (beta) and UreC (alpha) subunits. Three heterotrimers associate to form the active enzyme.

It is found in the cytoplasm. The catalysed reaction is urea + 2 H2O + H(+) = hydrogencarbonate + 2 NH4(+). Its pathway is nitrogen metabolism; urea degradation; CO(2) and NH(3) from urea (urease route): step 1/1. The chain is Urease subunit beta from Ralstonia nicotianae (strain ATCC BAA-1114 / GMI1000) (Ralstonia solanacearum).